The sequence spans 122 residues: Large ribosomal subunit protein bL12 (122 aa).

This sequence belongs to the bacterial ribosomal protein bL12 family. In terms of assembly, homodimer. Part of the ribosomal stalk of the 50S ribosomal subunit. Forms a multimeric L10(L12)X complex, where L10 forms an elongated spine to which 2 to 4 L12 dimers bind in a sequential fashion. Binds GTP-bound translation factors.

Forms part of the ribosomal stalk which helps the ribosome interact with GTP-bound translation factors. Is thus essential for accurate translation. In Latilactobacillus sakei subsp. sakei (strain 23K) (Lactobacillus sakei subsp. sakei), this protein is Large ribosomal subunit protein bL12.